We begin with the raw amino-acid sequence, 67 residues long: Cell division protein ZapB (67 aa).

Residues 3–59 are a coiled coil; the sequence is LELLSKLETKIQTALETIELLKMELEEEKQKSIGLAEQNQQLSQDLNSWNEKVTGLV.

It belongs to the ZapB family. As to quaternary structure, homodimer. The ends of the coiled-coil dimer bind to each other, forming polymers. Interacts with FtsZ.

It is found in the cytoplasm. Non-essential, abundant cell division factor that is required for proper Z-ring formation. It is recruited early to the divisome by direct interaction with FtsZ, stimulating Z-ring assembly and thereby promoting cell division earlier in the cell cycle. Its recruitment to the Z-ring requires functional FtsA or ZipA. The protein is Cell division protein ZapB of Shewanella woodyi (strain ATCC 51908 / MS32).